Consider the following 173-residue polypeptide: Inorganic pyrophosphatase (173 aa).

Residues Lys28, Arg42, and Tyr54 each contribute to the substrate site. Residues Asp64, Asp69, and Asp101 each contribute to the Mg(2+) site. Tyr140 contacts substrate.

The protein belongs to the PPase family. In terms of assembly, homohexamer. It depends on Mg(2+) as a cofactor.

Its subcellular location is the cytoplasm. The catalysed reaction is diphosphate + H2O = 2 phosphate + H(+). Its function is as follows. Catalyzes the hydrolysis of inorganic pyrophosphate (PPi) forming two phosphate ions. In Helicobacter pylori (strain J99 / ATCC 700824) (Campylobacter pylori J99), this protein is Inorganic pyrophosphatase.